We begin with the raw amino-acid sequence, 53 residues long: uncharacterized protein (53 aa).

The signal sequence occupies residues M1 to T23.

This is an uncharacterized protein from Acheta domesticus (House cricket).